Reading from the N-terminus, the 233-residue chain is Biosynthetic peptidoglycan transglycosylase (233 aa).

A helical membrane pass occupies residues 8-28; the sequence is LIALPVGIFIFFNAYVYGNII.

Belongs to the glycosyltransferase 51 family.

Its subcellular location is the cell inner membrane. The catalysed reaction is [GlcNAc-(1-&gt;4)-Mur2Ac(oyl-L-Ala-gamma-D-Glu-L-Lys-D-Ala-D-Ala)](n)-di-trans,octa-cis-undecaprenyl diphosphate + beta-D-GlcNAc-(1-&gt;4)-Mur2Ac(oyl-L-Ala-gamma-D-Glu-L-Lys-D-Ala-D-Ala)-di-trans,octa-cis-undecaprenyl diphosphate = [GlcNAc-(1-&gt;4)-Mur2Ac(oyl-L-Ala-gamma-D-Glu-L-Lys-D-Ala-D-Ala)](n+1)-di-trans,octa-cis-undecaprenyl diphosphate + di-trans,octa-cis-undecaprenyl diphosphate + H(+). Its pathway is cell wall biogenesis; peptidoglycan biosynthesis. Peptidoglycan polymerase that catalyzes glycan chain elongation from lipid-linked precursors. This Neisseria meningitidis serogroup B (strain ATCC BAA-335 / MC58) protein is Biosynthetic peptidoglycan transglycosylase.